The following is a 727-amino-acid chain: Glucans biosynthesis glucosyltransferase H (727 aa).

The segment at 18-45 (SAMPNERPGAMEPQSLTEMPEGFPRRST) is disordered. The next 7 membrane-spanning stretches (helical) occupy residues 58–78 (FFVV…MGAV), 90–110 (LVLL…CSGI), 278–298 (LQQF…GWWV), 408–428 (IMAY…LMLA), 460–480 (LFYI…LLLL), 496–516 (IFSV…MMFI), and 572–592 (LLAW…ISAW).

Belongs to the glycosyltransferase 2 family. OpgH subfamily.

It is found in the cell inner membrane. The protein operates within glycan metabolism; osmoregulated periplasmic glucan (OPG) biosynthesis. In terms of biological role, involved in the biosynthesis of osmoregulated periplasmic glucans (OPGs). The chain is Glucans biosynthesis glucosyltransferase H from Shewanella putrefaciens (strain CN-32 / ATCC BAA-453).